The sequence spans 95 residues: Small ribosomal subunit protein bS20c (95 aa).

The protein belongs to the bacterial ribosomal protein bS20 family.

The protein localises to the plastid. It localises to the chloroplast. In terms of biological role, binds directly to 16S ribosomal RNA. This Pyropia yezoensis (Susabi-nori) protein is Small ribosomal subunit protein bS20c.